The following is a 124-amino-acid chain: Small ribosomal subunit protein uS13 (124 aa).

Residues Gly-95–Arg-124 are disordered. The segment covering Gly-100–Ser-109 has biased composition (polar residues). A compositionally biased stretch (basic residues) spans Lys-111–Arg-124.

Belongs to the universal ribosomal protein uS13 family. Part of the 30S ribosomal subunit. Forms a loose heterodimer with protein S19. Forms two bridges to the 50S subunit in the 70S ribosome.

In terms of biological role, located at the top of the head of the 30S subunit, it contacts several helices of the 16S rRNA. In the 70S ribosome it contacts the 23S rRNA (bridge B1a) and protein L5 of the 50S subunit (bridge B1b), connecting the 2 subunits; these bridges are implicated in subunit movement. Contacts the tRNAs in the A and P-sites. This is Small ribosomal subunit protein uS13 from Tropheryma whipplei (strain TW08/27) (Whipple's bacillus).